Reading from the N-terminus, the 1264-residue chain is Protein fantom (1264 aa).

Coiled coils occupy residues 64–143 (LKQH…LQVQ), 196–268 (YSNS…NVET), 299–454 (LRIS…ESDI), and 488–555 (NKDL…VHLL). C2 domains are found at residues 577-714 (KQYK…FCTT) and 773-897 (AATT…SGIF). 2 disordered regions span residues 979–1018 (DTIS…YPSK) and 1047–1093 (QLAS…NTKQ). The span at 1056-1080 (SEDETEITEELEPEDEDRSASDSDD) shows a compositional bias: acidic residues.

This sequence belongs to the RPGRIP1 family. In terms of assembly, interacts with NPHP4 and NPHP1; NPHP1, NPHP4 and RPGRIP1L are proposed to form a functional NPHP1-4-8 module localized to cell-cell contacts and the ciliary transition zone; NPHP4 mediates the interaction between NPHP1 and RPGRIP1L. Interacts with IQCB1; the interaction likely requires additional interactors. Interacts with TBXA2R (via C-terminus), RPGR, NEK4. Interacts with NPHP4, INVS and DVL2; proposed to form a complex involved in DVL2 stabilization. Interacts with PSMD2. In terms of tissue distribution, ubiquitously expressed. Not found in heart and skin.

It localises to the cytoplasm. Its subcellular location is the cytoskeleton. It is found in the cilium basal body. The protein resides in the cilium axoneme. The protein localises to the microtubule organizing center. It localises to the centrosome. Its subcellular location is the cell junction. It is found in the tight junction. Negatively regulates signaling through the G-protein coupled thromboxane A2 receptor (TBXA2R). May be involved in mechanisms like programmed cell death, craniofacial development, patterning of the limbs, and formation of the left-right axis. Involved in the organization of apical junctions; the function is proposed to implicate a NPHP1-4-8 module. Does not seem to be strictly required for ciliogenesis. Involved in establishment of planar cell polarity such as in cochlear sensory epithelium and is proposed to implicate stabilization of disheveled proteins. Involved in regulation of proteasomal activity at the primary cilium probably implicating association with PSDM2. This Mus musculus (Mouse) protein is Protein fantom (Rpgrip1l).